A 149-amino-acid chain; its full sequence is Small ribosomal subunit protein uS13 (149 aa).

It belongs to the universal ribosomal protein uS13 family. Part of the 30S ribosomal subunit. Forms a loose heterodimer with protein S19. Forms two bridges to the 50S subunit in the 70S ribosome.

Located at the top of the head of the 30S subunit, it contacts several helices of the 16S rRNA. In the 70S ribosome it contacts the 23S rRNA (bridge B1a) and protein L5 of the 50S subunit (bridge B1b), connecting the 2 subunits; these bridges are implicated in subunit movement. The protein is Small ribosomal subunit protein uS13 of Thermococcus kodakarensis (strain ATCC BAA-918 / JCM 12380 / KOD1) (Pyrococcus kodakaraensis (strain KOD1)).